The chain runs to 131 residues: Fumarate reductase subunit C (131 aa).

3 helical membrane-spanning segments follow: residues 30–50, 57–77, and 109–129; these read EGTA…LFAL, WMGF…LITL, and IIKG…YVAL.

This sequence belongs to the FrdC family. In terms of assembly, part of an enzyme complex containing four subunits: a flavoprotein (FrdA), an iron-sulfur protein (FrdB), and two hydrophobic anchor proteins (FrdC and FrdD).

It localises to the cell inner membrane. In terms of biological role, two distinct, membrane-bound, FAD-containing enzymes are responsible for the catalysis of fumarate and succinate interconversion; fumarate reductase is used in anaerobic growth, and succinate dehydrogenase is used in aerobic growth. Anchors the catalytic components of the fumarate reductase complex to the cell inner membrane, binds quinones. The sequence is that of Fumarate reductase subunit C from Salmonella dublin (strain CT_02021853).